We begin with the raw amino-acid sequence, 150 residues long: MSDYKIWVDADACPNPIKEILFRAAERKALPLVLVANQMIRVPPSPYINQIRVGAGFDVADQYIVYHVEPTHLVITADIPLAALIIEKGALALNPRGELYTVDNIKQKLTMRDFMEDLRGSGVHTGGPDSFSQADKQAFANSLDKWLVRV.

This sequence belongs to the UPF0178 family.

This is UPF0178 protein Sbal195_1808 from Shewanella baltica (strain OS195).